The following is a 570-amino-acid chain: MRLSQLLVPTLREIPAEAEIPSHILMLKAALMRKLASGVYIYLPLGQRVLRKVEQIVREEMDRAGSQEVLMSALIPAELLKESGRWDVFGPEMFKLKDRNERDFCLGPTHEEVFTDLIRNEVKSYRQLPLILYQIQTKFRDERRPRFGVMRSREFIMKDAYSFDMDWEGLDKSFNKMYEAYCRIFDRCGLKYLVVEADSGAMGGKDSKEFMVISGVGEAVIAYCDNCGYAANEEKAECLINQEIVEEMLPKEEVYTPNVRTIEELVNFLGITPNKFVKTLIYKAKDNVVAALVRGDRDLNETKLLNILGIREEELELADASIVEKVTGAKVGFAGPIGLKGEVMIIVDNEIPQMRNFIVGANETDYHIKNVNYGRDFKADVVADIKNVIEGDKCPRCGSPLKIDRGIEVGHIFKLGTKYSDALGAKYVDEEGNEKPIIMGCYGIGINRTVAAIIEQHHDEKGIIWPMSVAPYHVIIVPVNVSNEAQNRVAEDIYAALQKEGIEVLIDDRDLRAGVKFNDADLLGIPIRITVGKKVDDGIVEIKLRENEEAEEVKISDVVEKVKNIIKEKM.

It belongs to the class-II aminoacyl-tRNA synthetase family. ProS type 1 subfamily. As to quaternary structure, homodimer.

It is found in the cytoplasm. It catalyses the reaction tRNA(Pro) + L-proline + ATP = L-prolyl-tRNA(Pro) + AMP + diphosphate. Functionally, catalyzes the attachment of proline to tRNA(Pro) in a two-step reaction: proline is first activated by ATP to form Pro-AMP and then transferred to the acceptor end of tRNA(Pro). As ProRS can inadvertently accommodate and process non-cognate amino acids such as alanine and cysteine, to avoid such errors it has two additional distinct editing activities against alanine. One activity is designated as 'pretransfer' editing and involves the tRNA(Pro)-independent hydrolysis of activated Ala-AMP. The other activity is designated 'posttransfer' editing and involves deacylation of mischarged Ala-tRNA(Pro). The misacylated Cys-tRNA(Pro) is not edited by ProRS. The sequence is that of Proline--tRNA ligase from Thermoanaerobacter pseudethanolicus (strain ATCC 33223 / 39E) (Clostridium thermohydrosulfuricum).